A 76-amino-acid polypeptide reads, in one-letter code: Omega-conotoxin-like Ai6.3 (76 aa).

The first 22 residues, Met1–Ala22, serve as a signal peptide directing secretion. Residues Val23–Asn50 constitute a propeptide that is removed on maturation. 3 cysteine pairs are disulfide-bonded: Cys53-Cys67, Cys60-Cys71, and Cys66-Cys75.

Belongs to the conotoxin O1 superfamily. As to expression, expressed by the venom duct.

The protein resides in the secreted. Functionally, omega-conotoxins act at presynaptic membranes, they bind and block voltage-gated calcium channels (Cav). The polypeptide is Omega-conotoxin-like Ai6.3 (Conus ammiralis (Admiral cone)).